The following is a 302-amino-acid chain: Ribosome-binding factor PSRP1, chloroplastic (302 aa).

The N-terminal 66 residues, 1–66 (MATLCTSAIN…SRNKPNVVCM (66 aa)), are a transit peptide targeting the chloroplast.

As to quaternary structure, binds to the mRNA channel of the chloroplast small ribosomal subunit and interacts with 16S sRNA nucleotides at the A-site and P-site.

The protein localises to the plastid. It is found in the chloroplast stroma. Its function is as follows. Ribosome-binding factor involved in light- and temperature-dependent control of protein synthesis. Interacts with 16S sRNA nucleotides at the A-site and P-site, where it protects the decoding center and inhibits translation by preventing tRNA binding. Stabilizes 70S ribosomes against dissociation. May be recycled by the combined action of ribosome-recycling factor (RRF) and EF-G. The polypeptide is Ribosome-binding factor PSRP1, chloroplastic (PSRP1) (Spinacia oleracea (Spinach)).